The following is a 1129-amino-acid chain: CRISPR-associated endonuclease Cas12b (1129 aa).

The tract at residues 1-14 is WED-I (OBD-I) domain; it reads MAVKSIKVKLRLDD. Positions 4 to 9 are binds sgRNA; sequence KSIKVK. The interval 15 to 386 is REC1 (Helical-1)domain; sequence MPEIRAGLWK…FATFTLPDAT (372 aa). Binds DNA protospacer adjacent motif (PAM) on target DNA regions lie at residues 118–122 and 143–144; these read QQIAR and GN. Positions 387-518 are WED-II (OBD-II) domain; it reads AHPIWTRFDK…QSQSEARGER (132 aa). A binds sgRNA region spans residues 442–446; the sequence is SMSEQ. Residues 519–628 form a ruvC-I domain region; it reads RPPYAAVFRL…LLKLPGETES (110 aa). The For DNase activity of RuvC domain role is filled by Asp-570. The tract at residues 573 to 574 is binds non-target ssDNA; that stretch reads LR. Residues 629-658 form a bridge helix domain region; it reads KDLRAIREERQRTLRQLRTQLAYLRLLVRC. The REC2 (Helical-II) domain stretch occupies residues 659–784; sequence GSEDVGRRER…SFFGKVSGQV (126 aa). Binds sgRNA stretches follow at residues 742–746, 753–754, 792–796, 800–819, and 835–839; these read RPKIR, VG, RFAIT, HIDH…IIME, and WVAKY. Residues 785–900 are ruvC-II domain; the sequence is IRAEKGSRFA…GTMYAAFSSR (116 aa). Glu-848 acts as the For DNase activity of RuvC domain in catalysis. The segment at 897-900 is binds non-target ssDNA; sequence FSSR. Ser-899 and Arg-911 together coordinate phosphate. The interval 901–974 is nuc-I domain; it reads FDARTGAPGI…SAEEGDFHQI (74 aa). Residues 973–978 form a binds sgRNA region; sequence QIHADL. Residues 975–993 form a ruvC-III domain region; that stretch reads HADLNAAQNLQQRLWSDFD. Asp-977 acts as the For DNase activity of RuvC domain in catalysis. Residues 994-1129 are nuc-II domain; sequence ISQIRLRCDW…DSACENTGDI (136 aa).

The protein belongs to the CRISPR-associated endonuclease Cas12b family. As to quaternary structure, monomer. The cofactor is a divalent metal cation.

Functionally, CRISPR (clustered regularly interspaced short palindromic repeat), is an adaptive immune system that provides protection against mobile genetic elements (viruses, transposable elements and conjugative plasmids). CRISPR clusters contain sequences complementary to antecedent mobile elements and target invading nucleic acids. CRISPR clusters are transcribed and processed into CRISPR RNA (crRNA). In type II CRISPR systems correct processing of pre-crRNA requires a trans-encoded small RNA (tracrRNA), endogenous ribonuclease 3 (rnc) and this protein. The tracrRNA serves as a guide for ribonuclease 3-aided processing of pre-crRNA. Protein-crRNA-tracrRNA endonucleolytically cleave dsDNA target complementary to the spacer; protein is inactive in the absence of crRNA homologous to the target and tracrRNA. Recognizes a short motif in the CRISPR repeat sequences (the 5' PAM or protospacer adjacent motif, TTN in this organism) to help distinguish self versus nonself, as targets within the bacterial CRISPR locus do not have PAMs. PAM recognition is also required for catalytic activity. Cleavage results in staggered 6-8 base 5'-overhangs 14-17 and 23-24 bases downstream of the PAM (protospacer adjacent motif) on the non-target and target strands respectively. Both target and non-target strand DNA are probably independently cleaved in the same active site. This Alicyclobacillus acidoterrestris (strain ATCC 49025 / DSM 3922 / CIP 106132 / NCIMB 13137 / GD3B) protein is CRISPR-associated endonuclease Cas12b.